Reading from the N-terminus, the 203-residue chain is TATA-binding protein 2 (203 aa).

Repeat copies occupy residues 28-104 (LQNI…ARII) and 118-195 (IQNI…YPVL).

This sequence belongs to the TBP family. Belongs to the TFIID complex together with the TBP-associated factors (TAFs). Binds DNA as monomer. Interacts with RF2A and TFIIB. Interacts with CWZF7.

The protein resides in the nucleus. General transcription factor that functions at the core of the DNA-binding multiprotein factor TFIID. Binding of TFIID to the TATA box is the initial transcriptional step of the pre-initiation complex (PIC), playing a role in the activation of eukaryotic genes transcribed by RNA polymerase II. This is TATA-binding protein 2 (TBP2) from Oryza sativa subsp. japonica (Rice).